The chain runs to 573 residues: MSQNSSSLLETWRQVVEDLNALSQQQDSGIPPLTPTQRAYLNLAKPIALVDGYAVLSTPHALAKNAIEHDLGESLTKVLSMRMGRSFSLAVSVEPSRDGEDPNAPPAPRQQELNYPYPGQGPQSPQGQQGQQGQHPVQQEVRAHAPAPHQQGQHQAAQHQPPANQAPGQYVVGGERGQASQSAGAWEQTHSMPAFDQGFDPSPAPVEPPPQPAHPLRIPRETPAHNPNREVSLNPKYTFENFVIGPFNRFANAAAVAVAESPAKAFNPLFISGGSGLGKTHLLHAVGNYAQELQPGLRIKYVSSEEFTNDYINSVRDDRQESFKRRYRNLDILMVDDIQFLAGKEGTQEEFFHTFNALHQAEKQIILSSDRPPRQLTTLEDRLRTRFEGGLITDIQPPDLETRIAILMKKAQADGTHVDREVLELIASRFESSIRELEGALIRVSAYSSLINQPIDKEMAIVALRDILPEPEDMEITAPVIMEVTAEYFKISVDTLRGAGKTRAVAHARQLAMYLCRELTDMSLPKIGDVFGGKDHTTVMYADRKIRQEMTEKRDTYDEIQQLTQLIKSRGRN.

Residues 1–85 (MSQNSSSLLE…TKVLSMRMGR (85 aa)) are domain I, interacts with DnaA modulators. Residues 85–231 (RSFSLAVSVE…TPAHNPNREV (147 aa)) are domain II. A disordered region spans residues 91–232 (VSVEPSRDGE…PAHNPNREVS (142 aa)). The span at 116-169 (PYPGQGPQSPQGQQGQQGQHPVQQEVRAHAPAPHQQGQHQAAQHQPPANQAPGQ) shows a compositional bias: low complexity. A compositionally biased stretch (polar residues) spans 178 to 191 (QASQSAGAWEQTHS). Pro residues predominate over residues 202-213 (SPAPVEPPPQPA). The segment at 232–448 (SLNPKYTFEN…GALIRVSAYS (217 aa)) is domain III, AAA+ region. 4 residues coordinate ATP: glycine 276, glycine 278, lysine 279, and threonine 280. Positions 449 to 573 (SLINQPIDKE…TQLIKSRGRN (125 aa)) are domain IV, binds dsDNA.

The protein belongs to the DnaA family. As to quaternary structure, oligomerizes as a right-handed, spiral filament on DNA at oriC.

The protein resides in the cytoplasm. Its function is as follows. Plays an essential role in the initiation and regulation of chromosomal replication. ATP-DnaA binds to the origin of replication (oriC) to initiate formation of the DNA replication initiation complex once per cell cycle. Binds the DnaA box (a 9 base pair repeat at the origin) and separates the double-stranded (ds)DNA. Forms a right-handed helical filament on oriC DNA; dsDNA binds to the exterior of the filament while single-stranded (ss)DNA is stabiized in the filament's interior. The ATP-DnaA-oriC complex binds and stabilizes one strand of the AT-rich DNA unwinding element (DUE), permitting loading of DNA polymerase. After initiation quickly degrades to an ADP-DnaA complex that is not apt for DNA replication. Binds acidic phospholipids. This chain is Chromosomal replication initiator protein DnaA, found in Corynebacterium efficiens (strain DSM 44549 / YS-314 / AJ 12310 / JCM 11189 / NBRC 100395).